The sequence spans 118 residues: Large ribosomal subunit protein bL20 (118 aa).

This sequence belongs to the bacterial ribosomal protein bL20 family.

Binds directly to 23S ribosomal RNA and is necessary for the in vitro assembly process of the 50S ribosomal subunit. It is not involved in the protein synthesizing functions of that subunit. This chain is Large ribosomal subunit protein bL20, found in Pseudomonas fluorescens (strain ATCC BAA-477 / NRRL B-23932 / Pf-5).